The chain runs to 607 residues: MNIVAKTIPLVVTTGPHAASTKIHKPGILHPHIRVPMREIAVHPTAGEPPVTVYDSSGPYTDPSHPVLIENGLPRLRHDWVVARGDVEAYEGRHVKPEDNGFATGERLTPEFSVRHQPLKATAGKAVTQLAYARAGIITPEMEFIAIRENLGREAAKEKPTRDGESFGAHIPDYVTAEFVRQEVASGRAIIPANINHPELEPMIIGRNFLVKINANIGNSAVTSSMAEEVEKMVWAIRWGADTVMDLSTGRNIHNIREWIIRNSPVPIGTVPLYQALEKVNGIAEDLNWEVFRDTLIEQAEQGVDYFTIHAGVRLHYIPLTVNRVTGIVSRGGSIMAKWCLHHHKESFLYEHFEEICDICRAYDVSFSLGDGLRPGSIADANDAAQFAELETLGELTQIAWARDCQVMIEGPGHVPMHKIKENMDKQLKTCGEAPFYTLGPLTTDIAPGYDHITSGIGAAMIGWFGTAMLCYVTPKEHLGLPDRNDVKVGVITYKIAAHAADLAKGHPAAQVRDDALSRARFEFRWEDQFNLSLDPDTARSFHDETLPKEAHKVAHFCSMCGPKFCSMRISHDIRAEAQKEGLEAMAARFKEGGELYMPLPTPASAE.

Substrate-binding positions include asparagine 216, methionine 245, tyrosine 274, histidine 310, 330 to 332 (SRG), 371 to 374 (DGLR), and glutamate 410. Position 414 (histidine 414) interacts with Zn(2+). Tyrosine 437 is a substrate binding site. Histidine 478 contributes to the Zn(2+) binding site. 3 residues coordinate [4Fe-4S] cluster: cysteine 558, cysteine 561, and cysteine 566.

Belongs to the ThiC family. Homodimer. [4Fe-4S] cluster is required as a cofactor.

It carries out the reaction 5-amino-1-(5-phospho-beta-D-ribosyl)imidazole + S-adenosyl-L-methionine = 4-amino-2-methyl-5-(phosphooxymethyl)pyrimidine + CO + 5'-deoxyadenosine + formate + L-methionine + 3 H(+). The protein operates within cofactor biosynthesis; thiamine diphosphate biosynthesis. Functionally, catalyzes the synthesis of the hydroxymethylpyrimidine phosphate (HMP-P) moiety of thiamine from aminoimidazole ribotide (AIR) in a radical S-adenosyl-L-methionine (SAM)-dependent reaction. This Agrobacterium fabrum (strain C58 / ATCC 33970) (Agrobacterium tumefaciens (strain C58)) protein is Phosphomethylpyrimidine synthase.